Here is a 289-residue protein sequence, read N- to C-terminus: MKLLTACITPFLPNYEIDFLSFERILYSQKKEGNGVVLLGSTGESLALTVKEKESLVAFACSLKLQIPIVVGVSGTSLNDALEWMKICHAYPIDGFLIPSPIYTKPGVYGQTLWFESLLNTTDKPVILYNIPSRAGTPLYLETVGALASHPSCYGVKDSGGSIERCREYAQIAPHLVVYCGDDSLWPQMHSYGAQGLISVLSNSWPREARSYVDNPYQESNTLLWQELSLWLSLTTNPIAIKAVLAYKQDIAHSVLRLPLSIADLQNAEALPNVVEKMLKWSQIYPVHT.

Residue T42 participates in pyruvate binding. The active-site Proton donor/acceptor is the Y129. K157 functions as the Schiff-base intermediate with substrate in the catalytic mechanism. Residue I198 participates in pyruvate binding.

It belongs to the DapA family. In terms of assembly, homotetramer; dimer of dimers.

The protein resides in the cytoplasm. The enzyme catalyses L-aspartate 4-semialdehyde + pyruvate = (2S,4S)-4-hydroxy-2,3,4,5-tetrahydrodipicolinate + H2O + H(+). Its pathway is amino-acid biosynthesis; L-lysine biosynthesis via DAP pathway; (S)-tetrahydrodipicolinate from L-aspartate: step 3/4. Functionally, catalyzes the condensation of (S)-aspartate-beta-semialdehyde [(S)-ASA] and pyruvate to 4-hydroxy-tetrahydrodipicolinate (HTPA). The chain is 4-hydroxy-tetrahydrodipicolinate synthase from Chlamydia caviae (strain ATCC VR-813 / DSM 19441 / 03DC25 / GPIC) (Chlamydophila caviae).